Here is a 362-residue protein sequence, read N- to C-terminus: Chorismate synthase (362 aa).

Arg46 is a binding site for NADP(+). FMN contacts are provided by residues 122–124 (RSS), 238–239 (NA), Gly278, 293–297 (KPTPS), and Arg319.

Belongs to the chorismate synthase family. Homotetramer. FMNH2 is required as a cofactor.

It carries out the reaction 5-O-(1-carboxyvinyl)-3-phosphoshikimate = chorismate + phosphate. It functions in the pathway metabolic intermediate biosynthesis; chorismate biosynthesis; chorismate from D-erythrose 4-phosphate and phosphoenolpyruvate: step 7/7. Its function is as follows. Catalyzes the anti-1,4-elimination of the C-3 phosphate and the C-6 proR hydrogen from 5-enolpyruvylshikimate-3-phosphate (EPSP) to yield chorismate, which is the branch point compound that serves as the starting substrate for the three terminal pathways of aromatic amino acid biosynthesis. This reaction introduces a second double bond into the aromatic ring system. This chain is Chorismate synthase, found in Campylobacter jejuni subsp. jejuni serotype O:6 (strain 81116 / NCTC 11828).